We begin with the raw amino-acid sequence, 218 residues long: Large ribosomal subunit protein uL3 (218 aa).

The segment at 137 to 157 (GVGASHGAHKNHRKPGSIGGA) is disordered.

The protein belongs to the universal ribosomal protein uL3 family. In terms of assembly, part of the 50S ribosomal subunit. Forms a cluster with proteins L14 and L19.

Its function is as follows. One of the primary rRNA binding proteins, it binds directly near the 3'-end of the 23S rRNA, where it nucleates assembly of the 50S subunit. This is Large ribosomal subunit protein uL3 from Kocuria rhizophila (strain ATCC 9341 / DSM 348 / NBRC 103217 / DC2201).